A 567-amino-acid polypeptide reads, in one-letter code: DNA ligase B (567 aa).

The active-site N6-AMP-lysine intermediate is Lys132.

It belongs to the NAD-dependent DNA ligase family. LigB subfamily.

The catalysed reaction is NAD(+) + (deoxyribonucleotide)n-3'-hydroxyl + 5'-phospho-(deoxyribonucleotide)m = (deoxyribonucleotide)n+m + AMP + beta-nicotinamide D-nucleotide.. Its function is as follows. Catalyzes the formation of phosphodiester linkages between 5'-phosphoryl and 3'-hydroxyl groups in double-stranded DNA using NAD as a coenzyme and as the energy source for the reaction. This Yersinia pseudotuberculosis serotype O:1b (strain IP 31758) protein is DNA ligase B.